The primary structure comprises 185 residues: Ribonuclease HII (185 aa).

One can recognise an RNase H type-2 domain in the interval 1 to 185 (MIILGIDEAG…KSYKPIQLLL (185 aa)). A divalent metal cation contacts are provided by aspartate 7, glutamate 8, and aspartate 99.

It belongs to the RNase HII family. Mn(2+) is required as a cofactor. Requires Mg(2+) as cofactor.

It localises to the cytoplasm. It catalyses the reaction Endonucleolytic cleavage to 5'-phosphomonoester.. Endonuclease that specifically degrades the RNA of RNA-DNA hybrids. In Francisella tularensis subsp. novicida (strain U112), this protein is Ribonuclease HII.